We begin with the raw amino-acid sequence, 181 residues long: ATP synthase subunit b, chloroplastic (181 aa).

A helical transmembrane segment spans residues 31–50; the sequence is NVLNIAILLSGVVYLGRNFL.

It belongs to the ATPase B chain family. As to quaternary structure, F-type ATPases have 2 components, F(1) - the catalytic core - and F(0) - the membrane proton channel. F(1) has five subunits: alpha(3), beta(3), gamma(1), delta(1), epsilon(1). F(0) has four main subunits: a(1), b(1), b'(1) and c(10-14). The alpha and beta chains form an alternating ring which encloses part of the gamma chain. F(1) is attached to F(0) by a central stalk formed by the gamma and epsilon chains, while a peripheral stalk is formed by the delta, b and b' chains.

Its subcellular location is the plastid. The protein resides in the chloroplast thylakoid membrane. Functionally, f(1)F(0) ATP synthase produces ATP from ADP in the presence of a proton or sodium gradient. F-type ATPases consist of two structural domains, F(1) containing the extramembraneous catalytic core and F(0) containing the membrane proton channel, linked together by a central stalk and a peripheral stalk. During catalysis, ATP synthesis in the catalytic domain of F(1) is coupled via a rotary mechanism of the central stalk subunits to proton translocation. Its function is as follows. Component of the F(0) channel, it forms part of the peripheral stalk, linking F(1) to F(0). This is ATP synthase subunit b, chloroplastic from Rhodomonas salina (Cryptomonas salina).